The chain runs to 475 residues: MHFETVIGLEVHVELKTDSKMFSPSPAHFGAEPNSNTNVIDLAYPGVLPVVNKRAVDWAMRAAMALNMEIATESKFDRKNYFYPDNPKAYQISQFDQPIGENGYIDIEVDGETKRIGITRLHMEEDAGKSTHKGEYSLVDLNRQGTPLIEIVSEPDIRSPKEAYAYLEKLRSIIQYTGVSDVKMEEGSLRCDANISLRPYGQEKFGTKAELKNLNSFNYVRKGLEYEEKRQEEELLSGGEIGQETRRFDESTGKTILMRVKEGSDDYRYFPEPDIVPLYIDDAWKERVRQTIPELPDERKAKYVNELGLPAYDAHVLTLTKEMSDFFESTIEHGADVKLTSNWLMGGVNEYLNKNQVELLDTKLTPENLAGMIKLIEDGTMSSKIAKKVFPELAAKGGNAKQIMEDNGLVQISDEATLLKFVNEALDNNEQSVEDYKNGKGKAMGFLVGQIMKASKGQANPQLVNQLLKQELDKR.

This sequence belongs to the GatB/GatE family. GatB subfamily. As to quaternary structure, heterotrimer of A, B and C subunits.

It carries out the reaction L-glutamyl-tRNA(Gln) + L-glutamine + ATP + H2O = L-glutaminyl-tRNA(Gln) + L-glutamate + ADP + phosphate + H(+). It catalyses the reaction L-aspartyl-tRNA(Asn) + L-glutamine + ATP + H2O = L-asparaginyl-tRNA(Asn) + L-glutamate + ADP + phosphate + 2 H(+). In terms of biological role, allows the formation of correctly charged Asn-tRNA(Asn) or Gln-tRNA(Gln) through the transamidation of misacylated Asp-tRNA(Asn) or Glu-tRNA(Gln) in organisms which lack either or both of asparaginyl-tRNA or glutaminyl-tRNA synthetases. The reaction takes place in the presence of glutamine and ATP through an activated phospho-Asp-tRNA(Asn) or phospho-Glu-tRNA(Gln). The sequence is that of Aspartyl/glutamyl-tRNA(Asn/Gln) amidotransferase subunit B from Staphylococcus aureus (strain MRSA252).